Consider the following 465-residue polypeptide: Zinc finger CCCH domain-containing protein 58 (465 aa).

The disordered stretch occupies residues 1–26; sequence MERYGGAGEDESRSDPSHEWSAQGTE. C3H1-type zinc fingers lie at residues 51-79, 97-125, and 145-173; these read RPDEPDCIYYLRTGVCGYGSRCRFNHPRN, RMGQPVCQHFMRTGTCKFGASCKYHHPRQ, and RPGEKECSYFMRTGQCKFGSTCRYHHPVP. 2 disordered regions span residues 173-200 and 274-302; these read PPGVQAPSQQQQQQLSAGPTMYPSLQSQ and LSPSAPAYQSGPSSTGVSNKEQTFPQRPE. A compositionally biased stretch (low complexity) spans 177-191; it reads QAPSQQQQQQLSAGP. The segment covering 283-298 has biased composition (polar residues); sequence SGPSSTGVSNKEQTFP. C3H1-type zinc fingers lie at residues 300 to 328 and 345 to 373; these read RPEQPECQYFMRTGDCKFGTSCRFHHPME and RPGAVPCTHFAQHGICKFGPACKFDHSLG. Residues 397–431 show a composition bias toward low complexity; that stretch reads SLGTLAPSSSSDQCTELISSSSIEPITTTTGGSET. The tract at residues 397–465 is disordered; that stretch reads SLGTLAPSSS…SASNEAKTSS (69 aa). Basic and acidic residues predominate over residues 444–453; it reads SHPEPAETNK. The segment covering 454-465 has biased composition (polar residues); the sequence is GDSASNEAKTSS.

The protein resides in the nucleus. The polypeptide is Zinc finger CCCH domain-containing protein 58 (Arabidopsis thaliana (Mouse-ear cress)).